The primary structure comprises 195 residues: Imidazoleglycerol-phosphate dehydratase (195 aa).

Belongs to the imidazoleglycerol-phosphate dehydratase family.

The protein resides in the cytoplasm. It catalyses the reaction D-erythro-1-(imidazol-4-yl)glycerol 3-phosphate = 3-(imidazol-4-yl)-2-oxopropyl phosphate + H2O. It functions in the pathway amino-acid biosynthesis; L-histidine biosynthesis; L-histidine from 5-phospho-alpha-D-ribose 1-diphosphate: step 6/9. The sequence is that of Imidazoleglycerol-phosphate dehydratase from Sphingopyxis alaskensis (strain DSM 13593 / LMG 18877 / RB2256) (Sphingomonas alaskensis).